We begin with the raw amino-acid sequence, 331 residues long: UPF0194 membrane protein YbhG (331 aa).

An N-terminal signal peptide occupies residues 1–19 (MKKPVVIGLVIAAIVAVIA). Residues 140–209 (RTISANDLEN…DLQDTTLIAP (70 aa)) adopt a coiled-coil conformation.

It belongs to the UPF0194 family.

The protein localises to the periplasm. The protein is UPF0194 membrane protein YbhG (ybhG) of Salmonella typhi.